We begin with the raw amino-acid sequence, 118 residues long: U16-barytoxin-Tl1c (118 aa).

Residues 1–16 (MKTIIVFLSFLVLVLA) form the signal peptide. A propeptide spanning residues 17–76 (TKFGDANEGVNREQTKEVIQNEFRGDFLNEMAAMSLLQQLEAIESALLEKEADRNSRQKR) is cleaved from the precursor. 3 disulfide bridges follow: cysteine 77–cysteine 92, cysteine 84–cysteine 97, and cysteine 91–cysteine 112.

This sequence belongs to the neurotoxin 14 (magi-1) family. 06 (ICK-Trit) subfamily. As to expression, expressed by the venom gland.

Its subcellular location is the secreted. Functionally, ion channel inhibitor. In Trittame loki (Brush-footed trapdoor spider), this protein is U16-barytoxin-Tl1c.